A 475-amino-acid chain; its full sequence is Mitochondrial adenyl nucleotide antiporter SLC25A24 (475 aa).

The regulatory N-terminal domain stretch occupies residues 1 to 173 (MLRWLRAFVL…RFWKHSTGID (173 aa)). Residues 1–197 (MLRWLRAFVL…EKKSGQWWRQ (197 aa)) are Mitochondrial intermembrane-facing. EF-hand domains are found at residues 19 to 54 (EPPT…LGIP), 55 to 88 (LGQD…KDHE), 86 to 121 (DHEK…LGLH), and 122 to 157 (ISEK…NPVT). Ca(2+)-binding residues include Asp32, Asn34, Asp36, Val38, Glu43, Asp68, Asn70, Asp72, Lys74, Glu79, Asp99, Asn101, Asp103, Lys105, Glu110, Asp135, Asp137, Thr139, Thr141, and Glu146. Residues 159-168 (IEEIIRFWKH) form a linker region region. The segment at 174–475 (IGDSLTIPDE…MKQTLGVAQK (302 aa)) is C-terminal transmembrane transporter domain. Solcar repeat units lie at residues 192-276 (GQWW…YKKL), 284-369 (LGTF…LKSY), and 381-469 (PGVM…MKQT). The helical transmembrane segment at 198–215 (LLAGGVAGAVSRTSTAPL) threads the bilayer. The Mitochondrial matrix portion of the chain corresponds to 216–250 (DRLKVMMQVHGSKSMNIFGGFRQMVKEGGIRSLWR). Residues 251–270 (GNGTNVIKIAPETAVKFWAY) traverse the membrane as a helical segment. The Mitochondrial intermembrane portion of the chain corresponds to 271 to 293 (EQYKKLLTEEGQKLGTFERFISG). The helical transmembrane segment at 294–307 (SMAGATAQTFIYPM) threads the bilayer. Topologically, residues 308-343 (EVLKTRLAVAKTGQYSGIYGCAKKILKHEGFGAFYK) are mitochondrial matrix. Lys318 bears the N6-acetyllysine; alternate mark. Residue Lys318 is modified to N6-succinyllysine; alternate. Lys334 bears the N6-acetyllysine mark. A helical membrane pass occupies residues 344–363 (GYIPNLLGIIPYAGIDLAVY). Topologically, residues 364-386 (ELLKSYWLDNFAKDSVNPGVMVL) are mitochondrial intermembrane. A helical transmembrane segment spans residues 387 to 404 (LSCGALSSTCGQLASYPL). Residues 405-443 (ALVRTRMQAQATVEGAPQLSMVGLFQRIVSKEGVSGLYR) are Mitochondrial matrix-facing. Lys435 is subject to N6-acetyllysine; alternate. Position 435 is an N6-succinyllysine; alternate (Lys435). A helical transmembrane segment spans residues 444–463 (GITPNFMKVLPAVGISYVVY). Over 464 to 475 (ENMKQTLGVAQK) the chain is Mitochondrial intermembrane.

It belongs to the mitochondrial carrier (TC 2.A.29) family. Monomer.

The protein localises to the mitochondrion inner membrane. The enzyme catalyses Mg(2+)(out) + phosphate(in) + ATP(out) = Mg(2+)(in) + phosphate(out) + ATP(in). It catalyses the reaction ADP(out) + phosphate(in) + H(+)(out) = ADP(in) + phosphate(out) + H(+)(in). It carries out the reaction AMP(out) + phosphate(in) = AMP(in) + phosphate(out). The catalysed reaction is phosphate(in) + ATP(out) + 2 H(+)(out) = phosphate(out) + ATP(in) + 2 H(+)(in). The enzyme catalyses dADP(in) + ADP(out) = dADP(out) + ADP(in). It catalyses the reaction Mg(2+)(in) + ADP(out) + ATP(in) + H(+)(out) = Mg(2+)(out) + ADP(in) + ATP(out) + H(+)(in). It carries out the reaction ADP(out) + diphosphate(in) = ADP(in) + diphosphate(out). The catalysed reaction is dAMP(in) + ADP(out) + H(+)(out) = dAMP(out) + ADP(in) + H(+)(in). The enzyme catalyses 3'-AMP(in) + ADP(out) + H(+)(out) = 3'-AMP(out) + ADP(in) + H(+)(in). It catalyses the reaction dAMP(out) + phosphate(in) = dAMP(in) + phosphate(out). It carries out the reaction 3'-AMP(out) + phosphate(in) = 3'-AMP(in) + phosphate(out). The catalysed reaction is dADP(out) + phosphate(in) + H(+)(out) = dADP(in) + phosphate(out) + H(+)(in). Activated by an increase in cytosolic calcium levels that induce a conformational change of the N-terminal regulatory domain, uncapping the channel and allowing transport. Inhibited by bathophenanthroline, mersalyl, p-hydroxymercuribenzoate, bromcresol purple and tannic acid. Its function is as follows. Electroneutral antiporter that mediates the transport of adenyl nucleotides through the inner mitochondrial membrane. Originally identified as an ATP-magnesium/inorganic phosphate antiporter, it also acts as a broad specificity adenyl nucleotide antiporter. By regulating the mitochondrial matrix adenyl nucleotide pool could adapt to changing cellular energetic demands and indirectly regulate adenyl nucleotide-dependent metabolic pathways. In vitro, a low activity is also observed with guanyl and pyrimidine nucleotides. May play a role in protecting cells against oxidative stress-induced cell death, by buffering calcium levels in the mitochondrial matrix through the formation of calcium-phosphate precipitates. The chain is Mitochondrial adenyl nucleotide antiporter SLC25A24 from Mus musculus (Mouse).